A 632-amino-acid chain; its full sequence is tRNA uridine 5-carboxymethylaminomethyl modification enzyme MnmG (632 aa).

FAD is bound by residues 13–18 (GGGHAG), V125, and S180. Position 273–287 (273–287 (GPRYCPSIEDKINRF)) interacts with NAD(+). Residue Q370 coordinates FAD.

This sequence belongs to the MnmG family. Homodimer. Heterotetramer of two MnmE and two MnmG subunits. FAD serves as cofactor.

It is found in the cytoplasm. Functionally, NAD-binding protein involved in the addition of a carboxymethylaminomethyl (cmnm) group at the wobble position (U34) of certain tRNAs, forming tRNA-cmnm(5)s(2)U34. The protein is tRNA uridine 5-carboxymethylaminomethyl modification enzyme MnmG of Shewanella sediminis (strain HAW-EB3).